The following is a 411-amino-acid chain: Na(+)-translocating NADH-quinone reductase subunit F (411 aa).

Residues 5 to 25 traverse the membrane as a helical segment; sequence VILALGIAAFTVIVLVLVAII. The region spanning 36–130 is the 2Fe-2S ferredoxin-type domain; that stretch reads GDITIDINDD…NMEVELPEEI (95 aa). Residues Cys73, Cys79, Cys82, and Cys114 each coordinate [2Fe-2S] cluster. Residues 133-273 enclose the FAD-binding FR-type domain; sequence VKKWECTVIS…SGPFGEFFAK (141 aa). A catalytic region spans residues 276-393; the sequence is DAEMVFIGGG…PVMNAAVIKM (118 aa).

This sequence belongs to the NqrF family. In terms of assembly, composed of six subunits; NqrA, NqrB, NqrC, NqrD, NqrE and NqrF. It depends on [2Fe-2S] cluster as a cofactor. Requires FAD as cofactor.

It localises to the cell inner membrane. It catalyses the reaction a ubiquinone + n Na(+)(in) + NADH + H(+) = a ubiquinol + n Na(+)(out) + NAD(+). Its function is as follows. NQR complex catalyzes the reduction of ubiquinone-1 to ubiquinol by two successive reactions, coupled with the transport of Na(+) ions from the cytoplasm to the periplasm. The first step is catalyzed by NqrF, which accepts electrons from NADH and reduces ubiquinone-1 to ubisemiquinone by a one-electron transfer pathway. The protein is Na(+)-translocating NADH-quinone reductase subunit F of Haemophilus influenzae (strain ATCC 51907 / DSM 11121 / KW20 / Rd).